The primary structure comprises 1409 residues: DNA-directed RNA polymerase subunit beta' (1409 aa).

Residues C70, C72, C85, and C88 each contribute to the Zn(2+) site. The Mg(2+) site is built by D460, D462, and D464. Residues C822, C896, C903, and C906 each coordinate Zn(2+).

This sequence belongs to the RNA polymerase beta' chain family. The RNAP catalytic core consists of 2 alpha, 1 beta, 1 beta' and 1 omega subunit. When a sigma factor is associated with the core the holoenzyme is formed, which can initiate transcription. The cofactor is Mg(2+). Zn(2+) is required as a cofactor.

The catalysed reaction is RNA(n) + a ribonucleoside 5'-triphosphate = RNA(n+1) + diphosphate. Functionally, DNA-dependent RNA polymerase catalyzes the transcription of DNA into RNA using the four ribonucleoside triphosphates as substrates. This chain is DNA-directed RNA polymerase subunit beta', found in Methylobacillus flagellatus (strain ATCC 51484 / DSM 6875 / VKM B-1610 / KT).